Consider the following 488-residue polypeptide: Ribulose bisphosphate carboxylase large chain (488 aa).

Residues N128 and T178 each coordinate substrate. K180 acts as the Proton acceptor in catalysis. Position 182 (K182) interacts with substrate. Residues K206, D208, and E209 each coordinate Mg(2+). At K206 the chain carries N6-carboxylysine. Catalysis depends on H298, which acts as the Proton acceptor. Substrate-binding residues include R299, H331, and S383.

It belongs to the RuBisCO large chain family. Type I subfamily. In terms of assembly, heterohexadecamer of 8 large chains and 8 small chains. It depends on Mg(2+) as a cofactor.

It catalyses the reaction 2 (2R)-3-phosphoglycerate + 2 H(+) = D-ribulose 1,5-bisphosphate + CO2 + H2O. It carries out the reaction D-ribulose 1,5-bisphosphate + O2 = 2-phosphoglycolate + (2R)-3-phosphoglycerate + 2 H(+). In terms of biological role, ruBisCO catalyzes two reactions: the carboxylation of D-ribulose 1,5-bisphosphate, the primary event in carbon dioxide fixation, as well as the oxidative fragmentation of the pentose substrate. Both reactions occur simultaneously and in competition at the same active site. The sequence is that of Ribulose bisphosphate carboxylase large chain from Variovorax paradoxus (strain S110).